We begin with the raw amino-acid sequence, 136 residues long: Ribonuclease VapC1 (136 aa).

The PINc domain occupies 18–129 (ILVDTSVLID…KKHFERLKEF (112 aa)). 2 residues coordinate Mg(2+): Asp21 and Asp101.

The protein belongs to the PINc/VapC protein family. Mg(2+) is required as a cofactor.

Functionally, toxic component of a type II toxin-antitoxin (TA) system. An RNase. Its cognate antitoxin is VapB1. This chain is Ribonuclease VapC1, found in Methanocaldococcus jannaschii (strain ATCC 43067 / DSM 2661 / JAL-1 / JCM 10045 / NBRC 100440) (Methanococcus jannaschii).